Reading from the N-terminus, the 255-residue chain is Cyclase-like protein 1 (255 aa).

A signal peptide spans 1 to 24; that stretch reads MTRSVSFPLFLFAVVLSLSSSLLA.

It belongs to the Cyclase 1 superfamily.

The protein resides in the secreted. It localises to the extracellular space. Its subcellular location is the extracellular matrix. In terms of biological role, acts as a negative regulator of fumonisin B1- and pathogen-induced programmed cell death (PCD), and regulates pathogen-induced symptom development. May function redundantly with CYCLASE2 for normal plant growth, development and viability. This chain is Cyclase-like protein 1, found in Arabidopsis thaliana (Mouse-ear cress).